Consider the following 437-residue polypeptide: Elongation factor 1-gamma (437 aa).

Alanine 2 carries the N-acetylalanine modification. One can recognise a GST N-terminal domain in the interval alanine 2–serine 87. The region spanning threonine 88–phenylalanine 216 is the GST C-terminal domain. 2 positions are modified to N6-acetyllysine: lysine 147 and lysine 212. Basic and acidic residues predominate over residues phenylalanine 221 to alanine 254. Positions phenylalanine 221–glutamine 268 are disordered. Lysine 253 participates in a covalent cross-link: Glycyl lysine isopeptide (Lys-Gly) (interchain with G-Cter in SUMO1). The EF-1-gamma C-terminal domain occupies alanine 276 to lysine 437. A Glycyl lysine isopeptide (Lys-Gly) (interchain with G-Cter in SUMO2) cross-link involves residue lysine 285. N6-acetyllysine is present on lysine 401. At lysine 434 the chain carries N6-acetyllysine; alternate. The residue at position 434 (lysine 434) is an N6-malonyllysine; alternate.

EF-1 is composed of four subunits: alpha, beta, delta, and gamma.

In terms of biological role, probably plays a role in anchoring the complex to other cellular components. This is Elongation factor 1-gamma (EEF1G) from Equus caballus (Horse).